The following is a 76-amino-acid chain: DNA-directed RNA polymerase subunit omega (76 aa).

Belongs to the RNA polymerase subunit omega family. The RNAP catalytic core consists of 2 alpha, 1 beta, 1 beta' and 1 omega subunit. When a sigma factor is associated with the core the holoenzyme is formed, which can initiate transcription.

The enzyme catalyses RNA(n) + a ribonucleoside 5'-triphosphate = RNA(n+1) + diphosphate. Promotes RNA polymerase assembly. Latches the N- and C-terminal regions of the beta' subunit thereby facilitating its interaction with the beta and alpha subunits. The sequence is that of DNA-directed RNA polymerase subunit omega (rpoZ) from Aquifex aeolicus (strain VF5).